A 366-amino-acid chain; its full sequence is Probable dual-specificity RNA methyltransferase RlmN (366 aa).

E107 functions as the Proton acceptor in the catalytic mechanism. The Radical SAM core domain maps to 113-342 (AEERMTACLS…MAQKFHVTVR (230 aa)). A disulfide bridge links C120 with C353. Residues C127, C131, and C134 each coordinate [4Fe-4S] cluster. S-adenosyl-L-methionine-binding positions include 177 to 178 (GE), S210, 233 to 235 (SLH), and N310. C353 (S-methylcysteine intermediate) is an active-site residue.

The protein belongs to the radical SAM superfamily. RlmN family. [4Fe-4S] cluster is required as a cofactor.

It is found in the cytoplasm. The catalysed reaction is adenosine(2503) in 23S rRNA + 2 reduced [2Fe-2S]-[ferredoxin] + 2 S-adenosyl-L-methionine = 2-methyladenosine(2503) in 23S rRNA + 5'-deoxyadenosine + L-methionine + 2 oxidized [2Fe-2S]-[ferredoxin] + S-adenosyl-L-homocysteine. The enzyme catalyses adenosine(37) in tRNA + 2 reduced [2Fe-2S]-[ferredoxin] + 2 S-adenosyl-L-methionine = 2-methyladenosine(37) in tRNA + 5'-deoxyadenosine + L-methionine + 2 oxidized [2Fe-2S]-[ferredoxin] + S-adenosyl-L-homocysteine. Functionally, specifically methylates position 2 of adenine 2503 in 23S rRNA and position 2 of adenine 37 in tRNAs. The polypeptide is Probable dual-specificity RNA methyltransferase RlmN (Chlorobium chlorochromatii (strain CaD3)).